We begin with the raw amino-acid sequence, 327 residues long: Malate dehydrogenase (327 aa).

11–17 (GAAGQIG) provides a ligand contact to NAD(+). Residues Arg92 and Arg98 each coordinate substrate. NAD(+)-binding positions include Asn105, Gln112, and 129–131 (VGN). 2 residues coordinate substrate: Asn131 and Arg162. Catalysis depends on His187, which acts as the Proton acceptor.

Belongs to the LDH/MDH superfamily. MDH type 2 family.

The enzyme catalyses (S)-malate + NAD(+) = oxaloacetate + NADH + H(+). In terms of biological role, catalyzes the reversible oxidation of malate to oxaloacetate. The sequence is that of Malate dehydrogenase from Thermus thermophilus (strain ATCC BAA-163 / DSM 7039 / HB27).